The sequence spans 220 residues: Large ribosomal subunit protein bL21c (220 aa).

This sequence belongs to the bacterial ribosomal protein bL21 family. As to quaternary structure, part of the 50S ribosomal subunit.

Its subcellular location is the plastid. It is found in the chloroplast. Its function is as follows. This protein binds to 23S ribosomal RNA in the presence of protein L20. This is Large ribosomal subunit protein bL21c (RPL21) from Arabidopsis thaliana (Mouse-ear cress).